We begin with the raw amino-acid sequence, 590 residues long: Leucine-rich repeat transmembrane neuronal protein 4 (590 aa).

An N-terminal signal peptide occupies residues 1-30 (MGFHLITQLKGMSVVLVLLPTLLLVMLTGA). The region spanning 31–61 (QRACPKNCRCDGKIVYCESHAFADIPENISG) is the LRRNT domain. Topologically, residues 31-424 (QRACPKNCRC…QEYEHVSFHK (394 aa)) are extracellular. N-linked (GlcNAc...) asparagine glycosylation occurs at asparagine 58. LRR repeat units follow at residues 62–83 (GSQG…QFAG), 86–107 (QLIW…AFQG), 110–131 (RLKE…TFHP), 134–155 (NLRN…QFKG), 158–179 (KLII…VFQD), 182–203 (NLDF…AFAG), 206–226 (KLKE…AHFP), 230–251 (NLRS…LTWT), 254–275 (SLHN…TFKC), and 278–299 (NLQK…TVNA). A glycan (N-linked (GlcNAc...) asparagine) is linked at asparagine 126. A glycan (N-linked (GlcNAc...) asparagine) is linked at asparagine 291. The region spanning 311-362 (NMWECSRSICPLFYWLKNFKGNKESTMICAGPKHIQGEKVSDAVETYNICSE) is the LRRCT domain. Residues 425–445 (IIAGSVALFLSVAMILLVIYV) form a helical membrane-spanning segment. The Cytoplasmic portion of the chain corresponds to 446–590 (SWKRYPASMK…PAIYLERIAN (145 aa)).

The protein belongs to the LRRTM family. Peripherally associated with AMPAR complex. AMPAR complex consists of an inner core made of 4 pore-forming GluA/GRIA proteins (GRIA1, GRIA2, GRIA3 and GRIA4) and 4 major auxiliary subunits arranged in a twofold symmetry. One of the two pairs of distinct binding sites is occupied either by CNIH2, CNIH3 or CACNG2, CACNG3. The other harbors CACNG2, CACNG3, CACNG4, CACNG8 or GSG1L. This inner core of AMPAR complex is complemented by outer core constituents binding directly to the GluA/GRIA proteins at sites distinct from the interaction sites of the inner core constituents. Outer core constituents include at least PRRT1, PRRT2, CKAMP44/SHISA9, FRRS1L and NRN1. The proteins of the inner and outer core serve as a platform for other, more peripherally associated AMPAR constituents, including LRRTM4. Alone or in combination, these auxiliary subunits control the gating and pharmacology of the AMPAR complex and profoundly impact their biogenesis and protein processing. As to expression, expressed in neuronal tissues.

It localises to the cell membrane. The protein localises to the postsynaptic cell membrane. In terms of biological role, may play a role in the development and maintenance of the vertebrate nervous system. Exhibits strong synaptogenic activity, restricted to excitatory presynaptic differentiation. This is Leucine-rich repeat transmembrane neuronal protein 4 (LRRTM4) from Homo sapiens (Human).